The chain runs to 397 residues: NADH-quinone oxidoreductase subunit H 1 (397 aa).

10 consecutive transmembrane segments (helical) span residues phenylalanine 7–alanine 27, proline 84–isoleucine 104, isoleucine 120–glycine 140, serine 156–isoleucine 176, leucine 198–alanine 218, methionine 258–proline 278, alanine 279–leucine 299, threonine 313–valine 333, leucine 337–isoleucine 357, and phenylalanine 376–threonine 396.

Belongs to the complex I subunit 1 family. In terms of assembly, NDH-1 is composed of 14 different subunits. Subunits NuoA, H, J, K, L, M, N constitute the membrane sector of the complex.

It localises to the cell inner membrane. The enzyme catalyses a quinone + NADH + 5 H(+)(in) = a quinol + NAD(+) + 4 H(+)(out). Functionally, NDH-1 shuttles electrons from NADH, via FMN and iron-sulfur (Fe-S) centers, to quinones in the respiratory chain. The immediate electron acceptor for the enzyme in this species is believed to be ubiquinone. Couples the redox reaction to proton translocation (for every two electrons transferred, four hydrogen ions are translocated across the cytoplasmic membrane), and thus conserves the redox energy in a proton gradient. This subunit may bind ubiquinone. The sequence is that of NADH-quinone oxidoreductase subunit H 1 from Solibacter usitatus (strain Ellin6076).